Here is a 456-residue protein sequence, read N- to C-terminus: UDP-glycosyltransferase 84B1 (456 aa).

UDP-alpha-D-glucose-binding positions include serine 278, 332–334 (SPQ), 349–357 (HCGWNSTME), and 371–374 (WTDQ).

This sequence belongs to the UDP-glycosyltransferase family.

Functionally, possesses low quercetin 7-O-glucosyltransferase activity in vitro. This Arabidopsis thaliana (Mouse-ear cress) protein is UDP-glycosyltransferase 84B1 (UGT84B1).